Consider the following 67-residue polypeptide: Sporulation protein 24 (67 aa).

A phosphoserine mark is found at S24 and S32.

Phosphorylated during meiosis. During meiosis, exists in both unphosphorylated and phosphorylated forms with the highest degree of phosphorylation occurring in mid-meiosis.

It localises to the prospore membrane. Functionally, required for efficient sporulation. This Saccharomyces cerevisiae (strain ATCC 204508 / S288c) (Baker's yeast) protein is Sporulation protein 24.